The primary structure comprises 154 residues: Protein X (154 aa).

A mitochondrial targeting sequence region spans residues 68–117 (PCALRFTSARCMETTVNAHQILPKVLHKRTLGLPAMSTTDLEAYFKDCVF).

Belongs to the orthohepadnavirus protein X family. May form homodimer. May interact with host CEBPA, CFLAR, CREB1, DDB1, E4F1, HBXIP, HSPD1/HSP60, NFKBIA, POLR2E and SMAD4. Interacts with host SMC5-SMC6 complex and induces its degradation. Interacts with host TRPC4AP; leading to prevent ubiquitination of TRPC4AP. Interacts with host PLSCR1; this interaction promotes ubiquitination and degradation of HBx and impairs HBx-mediated cell proliferation. In terms of processing, a fraction may be phosphorylated in insect cells and HepG2 cells, a human hepatoblastoma cell line. Phosphorylated in vitro by host protein kinase C or mitogen-activated protein kinase. N-acetylated in insect cells.

Its subcellular location is the host cytoplasm. The protein resides in the host nucleus. It is found in the host mitochondrion. Functionally, multifunctional protein that plays a role in silencing host antiviral defenses and promoting viral transcription. Does not seem to be essential for HBV infection. May be directly involved in development of cirrhosis and liver cancer (hepatocellular carcinoma). Most of cytosolic activities involve modulation of cytosolic calcium. The effect on apoptosis is controversial depending on the cell types in which the studies have been conducted. May induce apoptosis by localizing in mitochondria and causing loss of mitochondrial membrane potential. May also modulate apoptosis by binding host CFLAR, a key regulator of the death-inducing signaling complex (DISC). Promotes viral transcription by using the host E3 ubiquitin ligase DDB1 to target the SMC5-SMC6 complex to proteasomal degradation. This host complex would otherwise bind to viral episomal DNA, and prevents its transcription. Moderately stimulates transcription of many different viral and cellular transcription elements. Promoters and enhancers stimulated by HBx contain DNA binding sites for NF-kappa-B, AP-1, AP-2, c-EBP, ATF/CREB, or the calcium-activated factor NF-AT. This chain is Protein X, found in Hepatitis B virus genotype A2 subtype adw2 (strain Rutter 1979) (HBV-A).